A 275-amino-acid polypeptide reads, in one-letter code: Release factor glutamine methyltransferase (275 aa).

Residues 114 to 118 (GTGSG), Asp-137, Trp-165, and Asn-180 each bind S-adenosyl-L-methionine. 180–183 (NPPY) serves as a coordination point for substrate.

The protein belongs to the protein N5-glutamine methyltransferase family. PrmC subfamily.

It catalyses the reaction L-glutaminyl-[peptide chain release factor] + S-adenosyl-L-methionine = N(5)-methyl-L-glutaminyl-[peptide chain release factor] + S-adenosyl-L-homocysteine + H(+). Functionally, methylates the class 1 translation termination release factors RF1/PrfA and RF2/PrfB on the glutamine residue of the universally conserved GGQ motif. This is Release factor glutamine methyltransferase from Xylella fastidiosa (strain 9a5c).